Here is a 220-residue protein sequence, read N- to C-terminus: Thiamine-phosphate synthase (220 aa).

4-amino-2-methyl-5-(diphosphooxymethyl)pyrimidine-binding positions include 38 to 42 and N70; that span reads QYRDK. Residues D71 and D90 each contribute to the Mg(2+) site. T109 provides a ligand contact to 4-amino-2-methyl-5-(diphosphooxymethyl)pyrimidine. 135 to 137 contacts 2-[(2R,5Z)-2-carboxy-4-methylthiazol-5(2H)-ylidene]ethyl phosphate; that stretch reads TVS. K138 is a binding site for 4-amino-2-methyl-5-(diphosphooxymethyl)pyrimidine. 2-[(2R,5Z)-2-carboxy-4-methylthiazol-5(2H)-ylidene]ethyl phosphate contacts are provided by residues G171 and 191 to 192; that span reads IS.

This sequence belongs to the thiamine-phosphate synthase family. Mg(2+) serves as cofactor.

It carries out the reaction 2-[(2R,5Z)-2-carboxy-4-methylthiazol-5(2H)-ylidene]ethyl phosphate + 4-amino-2-methyl-5-(diphosphooxymethyl)pyrimidine + 2 H(+) = thiamine phosphate + CO2 + diphosphate. It catalyses the reaction 2-(2-carboxy-4-methylthiazol-5-yl)ethyl phosphate + 4-amino-2-methyl-5-(diphosphooxymethyl)pyrimidine + 2 H(+) = thiamine phosphate + CO2 + diphosphate. The enzyme catalyses 4-methyl-5-(2-phosphooxyethyl)-thiazole + 4-amino-2-methyl-5-(diphosphooxymethyl)pyrimidine + H(+) = thiamine phosphate + diphosphate. It participates in cofactor biosynthesis; thiamine diphosphate biosynthesis; thiamine phosphate from 4-amino-2-methyl-5-diphosphomethylpyrimidine and 4-methyl-5-(2-phosphoethyl)-thiazole: step 1/1. In terms of biological role, condenses 4-methyl-5-(beta-hydroxyethyl)thiazole monophosphate (THZ-P) and 2-methyl-4-amino-5-hydroxymethyl pyrimidine pyrophosphate (HMP-PP) to form thiamine monophosphate (TMP). This is Thiamine-phosphate synthase from Agrobacterium fabrum (strain C58 / ATCC 33970) (Agrobacterium tumefaciens (strain C58)).